A 166-amino-acid chain; its full sequence is Disulfide bond formation protein B (166 aa).

Topologically, residues 1–10 (MGLNITNRQG) are cytoplasmic. A helical transmembrane segment spans residues 11 to 27 (FLLVAAACAGAIGFALF). At 28 to 45 (AQYQLGEEPCPLCILQRI) the chain is on the periplasmic side. C37 and C40 are joined by a disulfide. A helical transmembrane segment spans residues 46-62 (GVMAVGALALLAALHNP). Over 63 to 69 (GKTGAKV) the chain is Cytoplasmic. A helical membrane pass occupies residues 70–86 (WGGLMTLAALSGAGVSL). At 87–143 (RQLWLQSLPADQVPQCGPGLEFLMESFPLWEVLSKVLKGSGECAAIQGRFLGMTMPF) the chain is on the periplasmic side. An intrachain disulfide couples C102 to C129. The chain crosses the membrane as a helical span at residues 144 to 162 (WVAVFFAGVIVWTLWLVGR). Residues 163-166 (RRRG) are Cytoplasmic-facing.

It belongs to the DsbB family.

Its subcellular location is the cell inner membrane. Required for disulfide bond formation in some periplasmic proteins. Acts by oxidizing the DsbA protein. This Chromobacterium violaceum (strain ATCC 12472 / DSM 30191 / JCM 1249 / CCUG 213 / NBRC 12614 / NCIMB 9131 / NCTC 9757 / MK) protein is Disulfide bond formation protein B.